Consider the following 506-residue polypeptide: Maturase K (506 aa).

Belongs to the intron maturase 2 family. MatK subfamily.

Its subcellular location is the plastid. The protein localises to the chloroplast. Its function is as follows. Usually encoded in the trnK tRNA gene intron. Probably assists in splicing its own and other chloroplast group II introns. The chain is Maturase K from Trifolium subterraneum (Subterranean clover).